The sequence spans 397 residues: DNA excision repair protein ERCC-8 (397 aa).

WD repeat units lie at residues 41–81 (IHCS…RQPY), 97–137 (VHKY…IADV), 184–224 (GHRQ…GCLI), 243–282 (AHNG…NTLV), and 332–371 (GHYK…SVPD). Residues 370–397 (PDDDDETSTRSQLNPAFEDAWSSSDEEG) form a disordered region. Phosphoserine occurs at positions 391, 392, and 393.

As to quaternary structure, part of the CSA complex (also named DCX(ERCC8) complex), a DCX E3 ubiquitin-protein ligase complex containing ERCC8, RBX1, DDB1 and CUL4A; the CSA complex interacts with RNA polymerase II; upon UV irradiation it interacts with the COP9 signalosome and preferentially with the hyperphosphorylated form of RNA polymerase II. Interacts with ERCC6/CSB (via CIM motif); promoting recruitment to lesion-stalled RNA polymerase II (Pol II). Interacts with KIAA1530/UVSSA. Interacts with a subunit of RNA polymerase II TFIIH.

It is found in the nucleus. The protein localises to the chromosome. The protein resides in the nucleus matrix. It functions in the pathway protein modification; protein ubiquitination. Functionally, substrate-recognition component of the CSA complex, a DCX (DDB1-CUL4-X-box) E3 ubiquitin-protein ligase complex, involved in transcription-coupled nucleotide excision repair (TC-NER), a process during which RNA polymerase II-blocking lesions are rapidly removed from the transcribed strand of active genes. Following recruitment to lesion-stalled RNA polymerase II (Pol II), the CSA complex mediates ubiquitination of Pol II subunit POLR2A/RPB1 at 'Lys-1268', a critical TC-NER checkpoint, governing RNA Pol II stability and initiating DNA damage excision by TFIIH recruitment. The CSA complex also promotes the ubiquitination and subsequent proteasomal degradation of ERCC6/CSB in a UV-dependent manner; ERCC6 degradation is essential for the recovery of RNA synthesis after transcription-coupled repair. Also plays a role in DNA double-strand breaks (DSSBs) repair by non-homologous end joining (NHEJ). In Bos taurus (Bovine), this protein is DNA excision repair protein ERCC-8 (ERCC8).